The chain runs to 208 residues: ATP synthase subunit beta, chloroplastic (208 aa).

The protein belongs to the ATPase alpha/beta chains family. F-type ATPases have 2 components, CF(1) - the catalytic core - and CF(0) - the membrane proton channel. CF(1) has five subunits: alpha(3), beta(3), gamma(1), delta(1), epsilon(1). CF(0) has four main subunits: a(1), b(1), b'(1) and c(9-12).

It is found in the plastid. The protein resides in the chloroplast thylakoid membrane. It catalyses the reaction ATP + H2O + 4 H(+)(in) = ADP + phosphate + 5 H(+)(out). Its function is as follows. Produces ATP from ADP in the presence of a proton gradient across the membrane. The catalytic sites are hosted primarily by the beta subunits. The chain is ATP synthase subunit beta, chloroplastic (atpB) from Lonchitis hirsuta (Tomato fern).